The sequence spans 343 residues: Ricin B-like lectin R40G2 (343 aa).

One can recognise a Ricin B-type lectin domain in the interval 194-340; sequence TVRVFSAAGE…CEGDNQRWKI (147 aa).

In terms of biological role, lectin which binds carbohydrates in vitro. Interacts through its lectin domain with glycan structures containing specific motifs. This chain is Ricin B-like lectin R40G2, found in Oryza sativa subsp. japonica (Rice).